The following is a 973-amino-acid chain: NLR family member X1 (973 aa).

A mitochondrion-targeting transit peptide spans 1-84 (MRWGCHLPRT…EAIQRHRRNL (84 aa)). Residues 73 to 554 (ATEAIQRHRR…RILPLLFNLL (482 aa)) are required for interaction with MAVS. The NACHT domain occupies 158 to 481 (QTVVLYGTVG…LRFFLAPCVE (324 aa)). 164–171 (GTVGTGKS) serves as a coordination point for ATP. Residues 554-972 (LKVVPRVFGR…TLLEQLGGSG (419 aa)) are required for the repression of MAVS-induced interferon signaling. The LRRNT domain occupies 665–692 (RQVLPPSELLDHLFFHYEFQNQRFSAEV). 8 LRR repeats span residues 693-716 (LGSL…VVAS), 722-745 (RHPL…TLMP), 747-775 (LLRA…LLHD), 776-799 (QCQI…VLMD), 809-832 (HLSL…LDRN), 833-855 (KQLQ…ALAK), 856-875 (AARK…ELSS), and 876-897 (EGRQ…VVAS). The LRRCT domain occupies 904 to 968 (VSEYWSVILS…SEVKTLLEQL (65 aa)).

It belongs to the NLRP family. In terms of assembly, homohexamer. Interacts with MAVS. Interacts with TUFM.

The protein localises to the mitochondrion outer membrane. Its function is as follows. Participates in antiviral signaling. Acts as a negative regulator of MAVS-mediated antiviral responses, through the inhibition of the virus-induced RLH (RIG-like helicase)-MAVS interaction. Instead, promotes autophagy by interacting with TUFM and subsequently recruiting the autophagy-related proteins ATG5 and ATG12. Also regulates MAVS-dependent NLRP3 inflammasome activation to attenuate apoptosis. Has no inhibitory function on NF-kappa-B signaling pathway, but enhances NF-kappa-B and JUN N-terminal kinase dependent signaling through the production of reactive oxygen species. Regulates viral mediated-inflammation and energy metabolism in a sex-dependent manner. In females, prevents uncontrolled inflammation and energy metabolism and thus, may contribute to the sex differences observed in infectious and inflammatory diseases. This chain is NLR family member X1 (Nlrx1), found in Rattus norvegicus (Rat).